The sequence spans 142 residues: uncharacterized protein (142 aa).

2 helical membrane passes run 75–97 (VFFR…YIVA) and 107–124 (LSIV…KLFY).

It is found in the cell membrane. This is an uncharacterized protein from Archaeoglobus fulgidus (strain ATCC 49558 / DSM 4304 / JCM 9628 / NBRC 100126 / VC-16).